We begin with the raw amino-acid sequence, 1259 residues long: Autism susceptibility gene 2 protein (1259 aa).

Disordered stretches follow at residues 1-87 (MDGP…EEDI), 108-285 (LKPQ…QDCC), 299-470 (CPQV…PPPP), 771-1027 (PNSM…MTVG), and 1119-1146 (REPHDYSHHHHHHHHPLSVDPRREHERG). Over residues 8–17 (HGLRKKRRSR) the composition is skewed to basic residues. The segment covering 28–41 (GGLGAGAAGGGGAG) has biased composition (gly residues). The segment covering 108–118 (LKPQERVEKRQ) has biased composition (basic and acidic residues). Over residues 136 to 147 (HSKKSRLSHPHH) the composition is skewed to basic residues. Residues 148 to 158 (YSSDRENDRNL) show a composition bias toward basic and acidic residues. Over residues 177 to 192 (PGQNSCRDSDSESASG) the composition is skewed to polar residues. A compositionally biased stretch (basic and acidic residues) spans 276–285 (RSQEKSQDCC). Positions 289–472 (IFEPVVLKDP…PTALPPPPPL (184 aa)) are important for regulation of lamellipodia formation. Pro residues-rich tracts occupy residues 331–345 (PPQPPPLSTQPPQGP) and 353–365 (APQPQVQRPPRPQ). The segment covering 386–410 (SLSQPLSAYNSSSLSLNSLSSSRSS) has biased composition (low complexity). Residues 436–447 (PNHSPLHSFTPT) show a composition bias toward polar residues. Pro residues predominate over residues 801 to 810 (PSFPTPPPWL). 3 stretches are compositionally biased toward basic and acidic residues: residues 813 to 850 (GELERSASAAAHDRDRDVDKRDSSVSKDDKERESVEKR), 876 to 935 (IRAH…EAKQ), and 960 to 993 (REAEPRKGEPAYENPKKSSEVKVKEERKEDHDLP). Residues 1125-1134 (SHHHHHHHHP) are compositionally biased toward basic residues. A phosphoserine mark is found at Ser1198 and Ser1233. A disordered region spans residues 1217–1259 (LSAPPPLISTLGGRPVSPRRTTPLSAEIRERPPSHTLKDIEAR). The span at 1243–1259 (EIRERPPSHTLKDIEAR) shows a compositional bias: basic and acidic residues.

The protein belongs to the AUTS2 family. As to quaternary structure, component of a PRC1-like complex that contains PCGF5, RNF2, CSNK2B, RYBP and AUTS2. Within this complex, interacts directly with PCGF5 and CSNK2B. Interacts with the histone acetyltransferase EP300/p300. Interacts (via Pro-rich region) with PREX1, DOCK1 and ELMO2. Strongly expressed in brain, skeletal muscle and kidney. Also expressed in placenta, lung and leukocytes.

It is found in the nucleus. Its subcellular location is the cytoplasm. The protein localises to the cytoskeleton. The protein resides in the cell projection. It localises to the growth cone. Functionally, component of a Polycomb group (PcG) multiprotein PRC1-like complex, a complex class required to maintain the transcriptionally repressive state of many genes, including Hox genes, throughout development. PcG PRC1 complex acts via chromatin remodeling and modification of histones; it mediates monoubiquitination of histone H2A 'Lys-119', rendering chromatin heritably changed in its expressibility. The PRC1-like complex that contains PCGF5, RNF2, CSNK2B, RYBP and AUTS2 has decreased histone H2A ubiquitination activity, due to the phosphorylation of RNF2 by CSNK2B. As a consequence, the complex mediates transcriptional activation. In the cytoplasm, plays a role in axon and dendrite elongation and in neuronal migration during embryonic brain development. Promotes reorganization of the actin cytoskeleton, lamellipodia formation and neurite elongation via its interaction with RAC guanine nucleotide exchange factors, which then leads to the activation of RAC1. The polypeptide is Autism susceptibility gene 2 protein (AUTS2) (Homo sapiens (Human)).